The chain runs to 338 residues: Ketol-acid reductoisomerase (NADP(+)) (338 aa).

Residues 1–181 enclose the KARI N-terminal Rossmann domain; that stretch reads MKVFYDKDAD…GGGRAGIIET (181 aa). Residues 24–27, Arg-47, and Ser-52 each bind NADP(+); that span reads YGSQ. His-107 is an active-site residue. Gly-133 lines the NADP(+) pocket. The KARI C-terminal knotted domain maps to 182–327; that stretch reads NFREETETDL…AKLRAMMPWI (146 aa). Residues Asp-190, Glu-194, Glu-226, and Glu-230 each coordinate Mg(2+). Ser-251 contacts substrate.

The protein belongs to the ketol-acid reductoisomerase family. It depends on Mg(2+) as a cofactor.

The enzyme catalyses (2R)-2,3-dihydroxy-3-methylbutanoate + NADP(+) = (2S)-2-acetolactate + NADPH + H(+). It carries out the reaction (2R,3R)-2,3-dihydroxy-3-methylpentanoate + NADP(+) = (S)-2-ethyl-2-hydroxy-3-oxobutanoate + NADPH + H(+). It functions in the pathway amino-acid biosynthesis; L-isoleucine biosynthesis; L-isoleucine from 2-oxobutanoate: step 2/4. Its pathway is amino-acid biosynthesis; L-valine biosynthesis; L-valine from pyruvate: step 2/4. In terms of biological role, involved in the biosynthesis of branched-chain amino acids (BCAA). Catalyzes an alkyl-migration followed by a ketol-acid reduction of (S)-2-acetolactate (S2AL) to yield (R)-2,3-dihydroxy-isovalerate. In the isomerase reaction, S2AL is rearranged via a Mg-dependent methyl migration to produce 3-hydroxy-3-methyl-2-ketobutyrate (HMKB). In the reductase reaction, this 2-ketoacid undergoes a metal-dependent reduction by NADPH to yield (R)-2,3-dihydroxy-isovalerate. This chain is Ketol-acid reductoisomerase (NADP(+)), found in Polynucleobacter necessarius subsp. necessarius (strain STIR1).